We begin with the raw amino-acid sequence, 369 residues long: Naringenin,2-oxoglutarate 3-dioxygenase (369 aa).

The 105-residue stretch at 193-297 folds into the Fe2OG dioxygenase domain; that stretch reads CVDMDQKVVV…RLSIATFQNP (105 aa). Fe cation-binding residues include H220, D222, and H278. 2-oxoglutarate is bound at residue R288.

The protein belongs to the iron/ascorbate-dependent oxidoreductase family. Fe(2+) serves as cofactor. It depends on L-ascorbate as a cofactor.

The catalysed reaction is a (2S)-flavan-4-one + 2-oxoglutarate + O2 = a (2R,3R)-dihydroflavonol + succinate + CO2. It functions in the pathway secondary metabolite biosynthesis; flavonoid biosynthesis. Its function is as follows. Catalyzes the 3-beta-hydroxylation of 2S-flavanones to 2R,3R-dihydroflavonols which are intermediates in the biosynthesis of flavonols, anthocyanidins, catechins and proanthocyanidins in plants. The polypeptide is Naringenin,2-oxoglutarate 3-dioxygenase (AN3) (Petunia hybrida (Petunia)).